We begin with the raw amino-acid sequence, 202 residues long: Holliday junction resolvase RecU (202 aa).

4 residues coordinate Mg(2+): threonine 85, aspartate 87, glutamate 100, and glutamine 119.

Belongs to the RecU family. It depends on Mg(2+) as a cofactor.

Its subcellular location is the cytoplasm. It catalyses the reaction Endonucleolytic cleavage at a junction such as a reciprocal single-stranded crossover between two homologous DNA duplexes (Holliday junction).. Its function is as follows. Endonuclease that resolves Holliday junction intermediates in genetic recombination. Cleaves mobile four-strand junctions by introducing symmetrical nicks in paired strands. Promotes annealing of linear ssDNA with homologous dsDNA. Required for DNA repair, homologous recombination and chromosome segregation. The chain is Holliday junction resolvase RecU from Streptococcus equi subsp. zooepidemicus (strain H70).